We begin with the raw amino-acid sequence, 842 residues long: Serine/threonine-protein phosphatase 4 regulatory subunit 3 (842 aa).

Regulatory subunit 3 (R3) of the histone H2A phosphatase complex (HTP-C) consisting of PPH3, PSY2 and PSY4.

The protein localises to the nucleus. Functionally, core regulatory subunit of the histone H2A phosphatase complex, which dephosphorylates H2AS128ph (gamma-H2A) that has been displaced from sites of DNA lesions in the double-stranded DNA break repair process. Dephosphorylation is necessary for efficient recovery from the DNA damage checkpoint. The protein is Serine/threonine-protein phosphatase 4 regulatory subunit 3 (PSY2) of Candida glabrata (strain ATCC 2001 / BCRC 20586 / JCM 3761 / NBRC 0622 / NRRL Y-65 / CBS 138) (Yeast).